Consider the following 876-residue polypeptide: DNA double-strand break repair Rad50 ATPase (876 aa).

ATP contacts are provided by residues Arg11, 31 to 37, and Gln139; that span reads NGAGKTT. 2 coiled-coil regions span residues 188–528 and 575–710; these read RERV…EDRL and SGVE…RKER. Positions 387–484 constitute a Zinc-hook domain; the sequence is EETLQSEYEE…RLESVRRELE (98 aa). Positions 432 and 435 each coordinate Zn(2+).

The protein belongs to the SMC family. RAD50 subfamily. Homodimer. Forms a heterotetramer composed of two Mre11 subunits and two Rad50 subunits. It depends on Zn(2+) as a cofactor.

Its function is as follows. Part of the Rad50/Mre11 complex, which is involved in the early steps of DNA double-strand break (DSB) repair. The complex may facilitate opening of the processed DNA ends to aid in the recruitment of HerA and NurA. Rad50 controls the balance between DNA end bridging and DNA resection via ATP-dependent structural rearrangements of the Rad50/Mre11 complex. This is DNA double-strand break repair Rad50 ATPase from Methanopyrus kandleri (strain AV19 / DSM 6324 / JCM 9639 / NBRC 100938).